Consider the following 221-residue polypeptide: Glutathione peroxidase 6 (221 aa).

The signal sequence occupies residues 1 to 19; sequence MAQKLWGSCLFSLFMAALA. Cysteine 73 is an active-site residue.

This sequence belongs to the glutathione peroxidase family.

It localises to the secreted. It carries out the reaction 2 glutathione + H2O2 = glutathione disulfide + 2 H2O. This is Glutathione peroxidase 6 (Gpx6) from Mus musculus (Mouse).